The chain runs to 310 residues: Aspartate carbamoyltransferase catalytic subunit (310 aa).

The carbamoyl phosphate site is built by R57 and T58. An L-aspartate-binding site is contributed by K86. The carbamoyl phosphate site is built by R107, H135, and Q138. L-aspartate-binding residues include R168 and R229. Residues L268 and P269 each contribute to the carbamoyl phosphate site.

It belongs to the aspartate/ornithine carbamoyltransferase superfamily. ATCase family. Heterooligomer of catalytic and regulatory chains.

The enzyme catalyses carbamoyl phosphate + L-aspartate = N-carbamoyl-L-aspartate + phosphate + H(+). It participates in pyrimidine metabolism; UMP biosynthesis via de novo pathway; (S)-dihydroorotate from bicarbonate: step 2/3. In terms of biological role, catalyzes the condensation of carbamoyl phosphate and aspartate to form carbamoyl aspartate and inorganic phosphate, the committed step in the de novo pyrimidine nucleotide biosynthesis pathway. This Thermococcus kodakarensis (strain ATCC BAA-918 / JCM 12380 / KOD1) (Pyrococcus kodakaraensis (strain KOD1)) protein is Aspartate carbamoyltransferase catalytic subunit.